We begin with the raw amino-acid sequence, 553 residues long: CTP synthase (553 aa).

The interval 1 to 270 (MTKYVFVTGG…DELICEELKL (270 aa)) is amidoligase domain. Residue serine 13 participates in CTP binding. Serine 13 lines the UTP pocket. Residues 14 to 19 (SLGKGI) and aspartate 71 contribute to the ATP site. Residues aspartate 71 and glutamate 144 each coordinate Mg(2+). Residues 151–153 (DIE), 191–196 (KTKPTQ), and lysine 227 contribute to the CTP site. Residues 191–196 (KTKPTQ) and lysine 227 contribute to the UTP site. The region spanning 295–547 (TIGMVGKYVE…VEAARAHHEA (253 aa)) is the Glutamine amidotransferase type-1 domain. Glycine 356 serves as a coordination point for L-glutamine. The active-site Nucleophile; for glutamine hydrolysis is cysteine 383. Residues 384-387 (LGMQ), glutamate 407, and arginine 473 each bind L-glutamine. Active-site residues include histidine 520 and glutamate 522.

It belongs to the CTP synthase family. As to quaternary structure, homotetramer.

The enzyme catalyses UTP + L-glutamine + ATP + H2O = CTP + L-glutamate + ADP + phosphate + 2 H(+). It catalyses the reaction L-glutamine + H2O = L-glutamate + NH4(+). The catalysed reaction is UTP + NH4(+) + ATP = CTP + ADP + phosphate + 2 H(+). It functions in the pathway pyrimidine metabolism; CTP biosynthesis via de novo pathway; CTP from UDP: step 2/2. With respect to regulation, allosterically activated by GTP, when glutamine is the substrate; GTP has no effect on the reaction when ammonia is the substrate. The allosteric effector GTP functions by stabilizing the protein conformation that binds the tetrahedral intermediate(s) formed during glutamine hydrolysis. Inhibited by the product CTP, via allosteric rather than competitive inhibition. Catalyzes the ATP-dependent amination of UTP to CTP with either L-glutamine or ammonia as the source of nitrogen. Regulates intracellular CTP levels through interactions with the four ribonucleotide triphosphates. The protein is CTP synthase of Paraburkholderia phymatum (strain DSM 17167 / CIP 108236 / LMG 21445 / STM815) (Burkholderia phymatum).